A 402-amino-acid chain; its full sequence is Renin (402 aa).

Residues 1–26 (MGGRRMPLWALLLLWTSCSFSLPTDT) form the signal peptide. Positions 27–64 (ASFGRILLKKMPSVREILEERGVDMTRISAEWGEFIKK) are cleaved as a propeptide — activation peptide. Residue Asn69 is glycosylated (N-linked (GlcNAc...) asparagine). Positions 84 to 399 (YYGEIGIGTP…DRHNNRIGFA (316 aa)) constitute a Peptidase A1 domain. Residue Asp102 is part of the active site. The cysteines at positions 115 and 122 are disulfide-linked. N-linked (GlcNAc...) asparagine glycosylation occurs at Asn139. A disulfide bond links Cys278 and Cys282. The active site involves Asp287. N-linked (GlcNAc...) asparagine glycosylation occurs at Asn320. An intrachain disulfide couples Cys321 to Cys358.

This sequence belongs to the peptidase A1 family. As to quaternary structure, interacts with ATP6AP2.

Its subcellular location is the secreted. The protein resides in the membrane. The enzyme catalyses Cleavage of Leu-|-Xaa bond in angiotensinogen to generate angiotensin I.. With respect to regulation, interaction with ATP6AP2 results in a 5-fold increased efficiency in angiotensinogen processing. Functionally, renin is a highly specific endopeptidase, whose only known function is to generate angiotensin I from angiotensinogen in the plasma, initiating a cascade of reactions that produce an elevation of blood pressure and increased sodium retention by the kidney. The chain is Renin (Ren1) from Rattus norvegicus (Rat).